The sequence spans 264 residues: Thymidylate synthase (264 aa).

Residues Arg21 and 126–127 (RR) contribute to the dUMP site. Residue Cys146 is the Nucleophile of the active site. DUMP contacts are provided by residues 166–169 (RSAD), Asn177, and 207–209 (HLY). Asp169 provides a ligand contact to (6R)-5,10-methylene-5,6,7,8-tetrahydrofolate. Residue Ala263 coordinates (6R)-5,10-methylene-5,6,7,8-tetrahydrofolate.

It belongs to the thymidylate synthase family. Bacterial-type ThyA subfamily. As to quaternary structure, homodimer.

The protein localises to the cytoplasm. It catalyses the reaction dUMP + (6R)-5,10-methylene-5,6,7,8-tetrahydrofolate = 7,8-dihydrofolate + dTMP. Its pathway is pyrimidine metabolism; dTTP biosynthesis. Its function is as follows. Catalyzes the reductive methylation of 2'-deoxyuridine-5'-monophosphate (dUMP) to 2'-deoxythymidine-5'-monophosphate (dTMP) while utilizing 5,10-methylenetetrahydrofolate (mTHF) as the methyl donor and reductant in the reaction, yielding dihydrofolate (DHF) as a by-product. This enzymatic reaction provides an intracellular de novo source of dTMP, an essential precursor for DNA biosynthesis. The protein is Thymidylate synthase of Bradyrhizobium diazoefficiens (strain JCM 10833 / BCRC 13528 / IAM 13628 / NBRC 14792 / USDA 110).